The sequence spans 235 residues: Futalosine hydrolase (235 aa).

It belongs to the PNP/UDP phosphorylase family. Futalosine hydrolase subfamily.

It carries out the reaction futalosine + H2O = dehypoxanthine futalosine + hypoxanthine. It participates in quinol/quinone metabolism; menaquinone biosynthesis. In terms of biological role, catalyzes the hydrolysis of futalosine (FL) to dehypoxanthine futalosine (DHFL) and hypoxanthine, a step in the biosynthesis of menaquinone (MK, vitamin K2). Does not accept aminodeoxyfutalosine (AFL) as a substrate. The chain is Futalosine hydrolase from Streptomyces coelicolor (strain ATCC BAA-471 / A3(2) / M145).